The primary structure comprises 309 residues: Low density lipoprotein receptor adapter protein 1-B (309 aa).

The 155-residue stretch at 41-195 (LLEGMLFHLK…SDGEGASSSQ (155 aa)) folds into the PID domain. Positions 179 to 201 (DKREKSGSDGEGASSSQSDGSSS) are disordered. Low complexity predominate over residues 189–201 (EGASSSQSDGSSS). The Clathrin box signature appears at 213-217 (LLDFE). Residues 250–277 (WELDDGLDEAFARLAESRTNPQVLDIGL) are AP-2 complex binding. The [DE]-X(1,2)-F-X-X-[FL]-X-X-X-R motif signature appears at 258–267 (EAFARLAESR).

Interacts (via PID domain) with ldlr (via NPXY motif). Binds to soluble clathrin trimers and to the adapter protein complex 2 (AP-2, beta 2 subunit). Binds to phosphoinositides, which regulate clathrin bud assembly at the cell surface. Interacts with the VLDL receptor (vldlr). Interacts with the vitellogenin receptor. In terms of tissue distribution, expressed at high level during oogenesis and embryogenesis. Found at low level in the adult liver and spleen. Found at very low level in testis and heart. Not found in the oocyte vegetal cortex.

Its subcellular location is the cytoplasm. In terms of biological role, adapter protein (clathrin-associated sorting protein (CLASP)) required for efficient endocytosis of the LDL receptor (LDLR). Also involved in the vitellogenin receptor mediated endocytosis of nutrients during oogenesis. In Xenopus laevis (African clawed frog), this protein is Low density lipoprotein receptor adapter protein 1-B.